We begin with the raw amino-acid sequence, 665 residues long: DNA ligase (665 aa).

NAD(+) contacts are provided by residues 35–39 (DAIYD), 88–89 (SL), and Glu-117. Lys-119 acts as the N6-AMP-lysine intermediate in catalysis. Arg-140, Glu-174, Lys-290, and Lys-314 together coordinate NAD(+). The Zn(2+) site is built by Cys-406, Cys-409, Cys-424, and Cys-429. Residues 588-665 (KKTERFAQLS…EEAFNELLVS (78 aa)) form the BRCT domain.

This sequence belongs to the NAD-dependent DNA ligase family. LigA subfamily. Mg(2+) serves as cofactor. Requires Mn(2+) as cofactor.

It catalyses the reaction NAD(+) + (deoxyribonucleotide)n-3'-hydroxyl + 5'-phospho-(deoxyribonucleotide)m = (deoxyribonucleotide)n+m + AMP + beta-nicotinamide D-nucleotide.. In terms of biological role, DNA ligase that catalyzes the formation of phosphodiester linkages between 5'-phosphoryl and 3'-hydroxyl groups in double-stranded DNA using NAD as a coenzyme and as the energy source for the reaction. It is essential for DNA replication and repair of damaged DNA. In Metamycoplasma arthritidis (strain 158L3-1) (Mycoplasma arthritidis), this protein is DNA ligase.